The primary structure comprises 317 residues: Serine/threonine-protein phosphatase PP1 isozyme 1 (317 aa).

Mn(2+) contacts are provided by Asp-75, His-77, Asp-103, and Asn-135. The Proton donor role is filled by His-136. Mn(2+)-binding residues include His-184 and His-259.

It belongs to the PPP phosphatase family. PP-1 subfamily. It depends on Mn(2+) as a cofactor.

The catalysed reaction is O-phospho-L-seryl-[protein] + H2O = L-seryl-[protein] + phosphate. The enzyme catalyses O-phospho-L-threonyl-[protein] + H2O = L-threonyl-[protein] + phosphate. This chain is Serine/threonine-protein phosphatase PP1 isozyme 1 (NPP1), found in Nicotiana tabacum (Common tobacco).